The chain runs to 508 residues: RanBP-type and C3HC4-type zinc finger-containing protein 1 (508 aa).

An N-acetylmethionine modification is found at Met1. Residues Met1–Arg218 are interaction with IRF3. The interaction with TAB2 stretch occupies residues Met1–Gln268. Ser50 is subject to Phosphoserine. Residues Ile55–Ile119 enclose the Ubiquitin-like domain. Residues Val69–Leu131 are interaction with RNF31. Positions Thr161–Pro191 are disordered. Residues Pro188–Glu220 form a RanBP2-type zinc finger. A coiled-coil region spans residues Asp231–Tyr260. The TRIAD supradomain stretch occupies residues Glu276–Cys504. Zn(2+) contacts are provided by Cys280, Cys283, Cys298, His300, Cys303, Cys306, and Cys321. Residues Cys280 to Cys330 form an RING-type 1 zinc finger. Tyr328 carries the phosphotyrosine modification. 11 residues coordinate Zn(2+): Cys330, Cys369, Cys374, Cys389, Cys392, Cys397, Cys400, His404, Cys409, Cys445, and Cys448. The IBR-type zinc-finger motif lies at Gln349 to Cys409. The RING-type 2; atypical zinc finger occupies Cys445–Thr474. Residue Cys458 is part of the active site. Zn(2+)-binding residues include Cys463 and Cys466.

Belongs to the RBR family. As to quaternary structure, component of the LUBAC complex (linear ubiquitin chain assembly complex) which consists of SHARPIN, RBCK1 and RNF31. LUBAC has a MW of approximately 600 kDa suggesting a heteromultimeric assembly of its subunits. Interacts with beta-I-type (PRKCB1) and zeta-type protein kinase C (PRKCZ). Interacts with UBE2L3. Interacts with IREB2 only in iron-rich conditions. Associates with the TNF-R1 signaling complex (TNF-RSC) in a stimulation-dependent manner. Interacts with EYA1, TAB2, TAB3, MAP3K7 TRAF6 and RIPK1. Interacts with IRF3. In terms of processing, auto-ubiquitinated. Auto-ubiquitination leads to degradation by the proteasome. Phosphorylated. In vitro, phosphorylation inhibits auto-ubiquitination activity. In terms of tissue distribution, widely expressed.

It carries out the reaction [E2 ubiquitin-conjugating enzyme]-S-ubiquitinyl-L-cysteine + [acceptor protein]-L-lysine = [E2 ubiquitin-conjugating enzyme]-L-cysteine + [acceptor protein]-N(6)-ubiquitinyl-L-lysine.. It participates in protein modification; protein ubiquitination. Its function is as follows. E3 ubiquitin-protein ligase, which accepts ubiquitin from specific E2 ubiquitin-conjugating enzymes, such as UBE2L3/UBCM4, and then transfers it to substrates. Functions as an E3 ligase for oxidized IREB2 and both heme and oxygen are necessary for IREB2 ubiquitination. Promotes ubiquitination of TAB2 and IRF3 and their degradation by the proteasome. Component of the LUBAC complex which conjugates linear ('Met-1'-linked) polyubiquitin chains to substrates and plays a key role in NF-kappa-B activation and regulation of inflammation. LUBAC conjugates linear polyubiquitin to IKBKG and RIPK1 and is involved in activation of the canonical NF-kappa-B and the JNK signaling pathways. Linear ubiquitination mediated by the LUBAC complex interferes with TNF-induced cell death and thereby prevents inflammation. LUBAC is recruited to the TNF-R1 signaling complex (TNF-RSC) following polyubiquitination of TNF-RSC components by BIRC2 and/or BIRC3 and to conjugate linear polyubiquitin to IKBKG and possibly other components contributing to the stability of the complex. The LUBAC complex is also involved in innate immunity by conjugating linear polyubiquitin chains at the surface of bacteria invading the cytosol to form the ubiquitin coat surrounding bacteria. LUBAC is not able to initiate formation of the bacterial ubiquitin coat, and can only promote formation of linear polyubiquitins on pre-existing ubiquitin. The bacterial ubiquitin coat acts as an 'eat-me' signal for xenophagy and promotes NF-kappa-B activation. Together with OTULIN, the LUBAC complex regulates the canonical Wnt signaling during angiogenesis. Binds polyubiquitin of different linkage types. The polypeptide is RanBP-type and C3HC4-type zinc finger-containing protein 1 (Rbck1) (Rattus norvegicus (Rat)).